The sequence spans 214 residues: Ribosomal RNA small subunit methyltransferase G (214 aa).

Residues G81, M86, 132 to 133 (AE), and R147 contribute to the S-adenosyl-L-methionine site.

This sequence belongs to the methyltransferase superfamily. RNA methyltransferase RsmG family.

Its subcellular location is the cytoplasm. The enzyme catalyses guanosine(527) in 16S rRNA + S-adenosyl-L-methionine = N(7)-methylguanosine(527) in 16S rRNA + S-adenosyl-L-homocysteine. In terms of biological role, specifically methylates the N7 position of guanine in position 527 of 16S rRNA. The sequence is that of Ribosomal RNA small subunit methyltransferase G from Pseudomonas syringae pv. syringae (strain B728a).